The primary structure comprises 106 residues: Foxo1-corepressor (106 aa).

A disordered region spans residues 1–44 (MGGPTRRHQEEGSAECLGGPSTRAAPGPGLRDFHFTTAGPSKAD). A Nuclear export signal motif is present at residues 78–87 (IGTLYIRLDL). Position 93 is a phosphothreonine; by PKA (Thr93).

Interacts with FOXO1 (via N-terminal domain); the interaction is direct, occurs in a forskolin-independent manner that prevents SIRT1 binding to FOXO1. Interacts with FOXO3. Does not interact with FOXO4. In terms of processing, phosphorylated at Thr-93 by PKA, leading to import into the nucleus. Expressed in adipocytes. Expressed in brown and white adipose tissue but not in liver. Protein levels in brown and white adipose tissues decrease following fasting (at protein level). Expressed in white and brown adipose tissues. Expressed in adipocytes. Not expressed in liver, skeletal muscle and brain.

It localises to the cytoplasm. The protein localises to the cytosol. It is found in the nucleus. Functionally, regulator of adipocytes that acts by repressing FOXO1 transcriptional activity. Acts by promoting acetylation of FOXO1, both by preventing the interaction between FOXO1 and SIRT1 deacetylase, and by mediating acetyltransferase activity in vitro. Regulates insulin sensitivity and energy metabolism. The polypeptide is Foxo1-corepressor (Fcor) (Mus musculus (Mouse)).